Consider the following 734-residue polypeptide: Exonuclease 1 (734 aa).

Residues Met-1 to Asn-99 are N-domain. 7 residues coordinate Mg(2+): Asp-30, Asp-78, Glu-150, Asp-152, Asp-171, Asp-173, and Asp-225. Positions Arg-138 to Ser-229 are I-domain. Disordered stretches follow at residues Glu-599 to Thr-650, Ala-656 to Gly-675, and Gly-685 to Val-716. Residues Pro-604–Asp-620 show a composition bias toward polar residues. Basic and acidic residues predominate over residues Ser-621 to Ser-641. Over residues Gly-700 to Asn-715 the composition is skewed to polar residues.

It belongs to the XPG/RAD2 endonuclease family. EXO1 subfamily. Requires Mg(2+) as cofactor.

It localises to the nucleus. Its function is as follows. 5'-&gt;3' double-stranded DNA exonuclease which may also contain a cryptic 3'-&gt;5' double-stranded DNA exonuclease activity. Also exhibits endonuclease activity against 5'-overhanging flap structures similar to those generated by displacement synthesis when DNA polymerase encounters the 5'-end of a downstream Okazaki fragment. Required for DNA mismatch repair (MMR). This chain is Exonuclease 1 (exo1), found in Xenopus laevis (African clawed frog).